A 568-amino-acid polypeptide reads, in one-letter code: uncharacterized protein (568 aa).

A compositionally biased stretch (basic and acidic residues) spans 334-346 (DDNEEKNNDRPKI). 2 disordered regions span residues 334–382 (DDNE…NDQN) and 436–479 (QVEE…SCKN). The span at 458-477 (KIASSASKNDNSNNKNSKSC) shows a compositional bias: low complexity.

The protein to yeast YJL043w.

This is an uncharacterized protein from Saccharomyces cerevisiae (strain ATCC 204508 / S288c) (Baker's yeast).